A 1557-amino-acid chain; its full sequence is Ras guanine nucleotide exchange factor K (1557 aa).

The span at 1 to 16 (MEPTINPPVNLPPPVP) shows a compositional bias: pro residues. 6 disordered regions span residues 1–121 (MEPT…SYTV), 146–181 (VETL…KLSV), 195–238 (LYQQ…SPQL), 283–347 (SPLP…GLTP), 558–619 (NNNN…DELS), and 881–937 (TNNN…QVNH). Composition is skewed to low complexity over residues 17 to 40 (SRSN…NNTN), 52 to 63 (SSPSSPSSPSPS), 73 to 90 (NNNN…NGNV), 102 to 114 (ISSP…HTSS), 148 to 161 (TLSS…KTTT), 195 to 207 (LYQQ…NPNS), and 222 to 236 (PPSS…STSP). Residues 283 to 310 (SPLPPPPLTIPNKVPPLPMRLPPPPPPQ) show a composition bias toward pro residues. Coiled coils occupy residues 310-338 (QQLD…SNST) and 591-629 (NNNN…EEEL). The segment covering 311-333 (QLDQMYSNNNQQQQQQQQQQQNN) has biased composition (low complexity). Over residues 334–343 (ESNSTTTSEG) the composition is skewed to polar residues. Low complexity-rich tracts occupy residues 558 to 610 (NNNN…NNNN) and 881 to 928 (TNNN…TPTT). One can recognise an N-terminal Ras-GEF domain in the interval 1058–1177 (LNAEIDAATL…QIRNCILKRT (120 aa)). Positions 1254–1303 (PSISQNTPSSPSLIPSSPRPITSSSSVSSSTLLKSPLSQQAKSRIPETKT) are disordered. Positions 1261-1291 (PSSPSLIPSSPRPITSSSSVSSSTLLKSPLS) are enriched in low complexity. In terms of domain architecture, Ras-GEF spans 1316–1549 (DDEEIARQLT…YHLSLLKEPR (234 aa)).

Its function is as follows. Promotes the exchange of Ras-bound GDP by GTP. This is Ras guanine nucleotide exchange factor K (gefK) from Dictyostelium discoideum (Social amoeba).